A 676-amino-acid chain; its full sequence is MAGLLPRAYGGVLRRSYIYLGSQCSNSVSRLTVGSTFRLVRMKSWGTSKFHTNGSPVLNEIKKISKSNGITIINPLVNKVTTNNVSTSSNGKAAVAAATAATAVSLGSTGQDDALSRNTDFLHIQNILLQKNQDRMNKQKLLSEATNFYERFKINTKWLLIRGNRPFSADEIGTLFSWIILSQILWIILGTTTFVSILLIIFNTVFAKEMVGNVVGKLLNIFLDGIDVKFQDALVPEWRKGCIRFNNVQLRTHPLQASEPENINDYNELVNNMIEFDLKLHQIELSLSLKKWLLGNGLIQDLTIMGMRGNITVTPVSLENKIDDNQRVNLIDWFSNPYYHLGNVKVTDSSIILHDNQLSKDFKVSIYNLDMPQLRFQWIINDFLSSNVVDGSINHSLFNIHKRQHKLAYIKDLENDLSDWKRITRIRLDSIDVKKLGLNNSNAFNWMDDGQLDIIADVMLPNEQENEPDFDFTRNKKEHMSKSNNKYVVLDLKFRFKDLKAIFPDRAPRLSNGEEILSLDELKQIILFINRKYDLYHSYANSSYKNTLWDAPNIAINKAKSFPVTTVFQSKKDFSNEDSDEEDRKLKKQIIRFHDDISTPNNELVLSCKVVKNINELKNMVLFWETGIYDSLSMELYIDLMKMVEEWEYKKKTNWMTDWGSSVASQLIIVGFGAMV.

Residues 1-17 (MAGLLPRAYGGVLRRSY) constitute a mitochondrion transit peptide. Residues 18–183 (IYLGSQCSNS…TLFSWIILSQ (166 aa)) are Mitochondrial matrix-facing. A helical membrane pass occupies residues 184-204 (ILWIILGTTTFVSILLIIFNT). Residues 205–655 (VFAKEMVGNV…EWEYKKKTNW (451 aa)) are Mitochondrial intermembrane-facing. A helical transmembrane segment spans residues 656 to 676 (MTDWGSSVASQLIIVGFGAMV).

It belongs to the MDM31/MDM32 family.

The protein localises to the mitochondrion inner membrane. Its function is as follows. Involved in the organization of the mitochondrial membranes and the global structure of the mitochondria. Also required for mitochondrial distribution and mobility as well as for the maintenance of mitochondrial DNA nucleoids structures. In Vanderwaltozyma polyspora (strain ATCC 22028 / DSM 70294 / BCRC 21397 / CBS 2163 / NBRC 10782 / NRRL Y-8283 / UCD 57-17) (Kluyveromyces polysporus), this protein is Mitochondrial distribution and morphology protein 32 (MDM32).